The chain runs to 524 residues: Chromosomal replication initiator protein DnaA (524 aa).

Positions 1 to 85 (MSQNSSSLLE…TRVLSLRMGR (85 aa)) are domain I, interacts with DnaA modulators. The domain II stretch occupies residues 85–182 (RSFSLAVSVE…TPAHNPNREV (98 aa)). The tract at residues 95-183 (PEQEIPETPA…PAHNPNREVS (89 aa)) is disordered. Over residues 148 to 158 (APEPHPAPIAD) the composition is skewed to pro residues. The interval 183 to 399 (SLNPKYTFES…GALIRVSAYS (217 aa)) is domain III, AAA+ region. ATP is bound by residues Gly-227, Gly-229, Lys-230, and Thr-231. The domain IV, binds dsDNA stretch occupies residues 400-524 (SLINQPIDKE…TQLIKSRGRN (125 aa)).

It belongs to the DnaA family. Oligomerizes as a right-handed, spiral filament on DNA at oriC.

The protein resides in the cytoplasm. Plays an essential role in the initiation and regulation of chromosomal replication. ATP-DnaA binds to the origin of replication (oriC) to initiate formation of the DNA replication initiation complex once per cell cycle. Binds the DnaA box (a 9 base pair repeat at the origin) and separates the double-stranded (ds)DNA. Forms a right-handed helical filament on oriC DNA; dsDNA binds to the exterior of the filament while single-stranded (ss)DNA is stabiized in the filament's interior. The ATP-DnaA-oriC complex binds and stabilizes one strand of the AT-rich DNA unwinding element (DUE), permitting loading of DNA polymerase. After initiation quickly degrades to an ADP-DnaA complex that is not apt for DNA replication. Binds acidic phospholipids. The sequence is that of Chromosomal replication initiator protein DnaA from Corynebacterium glutamicum (strain ATCC 13032 / DSM 20300 / JCM 1318 / BCRC 11384 / CCUG 27702 / LMG 3730 / NBRC 12168 / NCIMB 10025 / NRRL B-2784 / 534).